The sequence spans 264 residues: tRNA (guanine-N(1)-)-methyltransferase (264 aa).

Residues glycine 125 and 145 to 150 (LGDFVL) contribute to the S-adenosyl-L-methionine site.

The protein belongs to the RNA methyltransferase TrmD family. As to quaternary structure, homodimer.

It localises to the cytoplasm. It carries out the reaction guanosine(37) in tRNA + S-adenosyl-L-methionine = N(1)-methylguanosine(37) in tRNA + S-adenosyl-L-homocysteine + H(+). In terms of biological role, specifically methylates guanosine-37 in various tRNAs. The protein is tRNA (guanine-N(1)-)-methyltransferase of Burkholderia mallei (strain NCTC 10247).